The following is a 1680-amino-acid chain: RAF-like serine/threonine-protein kinase PRAF (1680 aa).

A disordered region spans residues 86 to 163 (FSPSDPHNSV…TPSDDGKDFP (78 aa)). In terms of domain architecture, PB1 spans 166–267 (RVKFMCSFGG…SRLRVFLFPA (102 aa)). 7 disordered regions span residues 363–388 (LTGN…PLLA), 417–516 (PQYT…DSQQ), 556–580 (PDML…QPQQ), 594–613 (GANH…SQQF), 641–672 (QSTS…PQLQ), 700–725 (RSFR…LHRQ), and 1186–1226 (LPNA…LGGQ). Residues 366 to 388 (NLSNRSNAPSAPSSAPSSPPLLA) show a composition bias toward low complexity. Residues 446–482 (HEMHYRSTDSRRGPESPPKKFHDALHQDHPITVEQRR) are compositionally biased toward basic and acidic residues. Composition is skewed to low complexity over residues 560–580 (QSSG…QPQQ) and 603–613 (QGDQQQQSQQF). Over residues 641–651 (QSTSYHGSAPS) the composition is skewed to polar residues. Positions 1204–1217 (SRSSSSSLSELSKS) are enriched in low complexity. S1248 carries the phosphoserine modification. Over residues 1339–1354 (ASTVDKENQEEVRTGL) the composition is skewed to basic and acidic residues. The interval 1339–1372 (ASTVDKENQEEVRTGLDEPADEDKANSTGLGSDP) is disordered. At S1365 the chain carries Phosphoserine. Residues 1389 to 1655 (LEELRELGSG…SDIAKELRTM (267 aa)) enclose the Protein kinase domain. ATP contacts are provided by residues 1395 to 1403 (LGSGTFGTV) and K1416. The active-site Proton acceptor is the D1518. A disordered region spans residues 1661–1680 (PKTQAQTQGQSHPHPQMQIV).

It belongs to the protein kinase superfamily. Ser/Thr protein kinase family. Post-translationally, hyperphosphorylated in response to auxin. Its phosphorylation state is also rapidly stimulated by photosynthetic activity (e.g. in response to blue light and red light irradiation); dephosphorylated in the darkness.

The protein localises to the cytoplasm. It carries out the reaction L-seryl-[protein] + ATP = O-phospho-L-seryl-[protein] + ADP + H(+). The enzyme catalyses L-threonyl-[protein] + ATP = O-phospho-L-threonyl-[protein] + ADP + H(+). Its activity is regulated as follows. Activated by auxin via rapid phosphorylation. Regulated by photosynthesis-activity-dependent changes in its phosphorylation status. In terms of biological role, RAF-like protein kinase acting as a central mediator of a fast response pathway to auxin involving proteins phosphorylation, and leading to rapid cellular responses including membrane depolarization and cytoplasmic streaming. Required for general growth and developmental process. Photosynthesis signaling kinase involved in the regulation of the sucrose metabolism involving PGM1. Necessary for optimal chloroplast electron transport rate (ETR). In Marchantia polymorpha (Common liverwort), this protein is RAF-like serine/threonine-protein kinase PRAF.